The following is a 67-amino-acid chain: DNA-directed RNA polymerase subunit omega (67 aa).

Belongs to the RNA polymerase subunit omega family. In terms of assembly, the RNAP catalytic core consists of 2 alpha, 1 beta, 1 beta' and 1 omega subunit. When a sigma factor is associated with the core the holoenzyme is formed, which can initiate transcription.

The enzyme catalyses RNA(n) + a ribonucleoside 5'-triphosphate = RNA(n+1) + diphosphate. Functionally, promotes RNA polymerase assembly. Latches the N- and C-terminal regions of the beta' subunit thereby facilitating its interaction with the beta and alpha subunits. This is DNA-directed RNA polymerase subunit omega from Burkholderia multivorans (strain ATCC 17616 / 249).